A 94-amino-acid chain; its full sequence is RxLR effector protein PITG_15972 (94 aa).

The signal sequence occupies residues 1–21; that stretch reads MRAVYILAMACAATLQASSSA. The short motif at 50–65 is the RxLR-dEER element; it reads RLLRVEDKEEETEEER.

Belongs to the RxLR effector family.

It localises to the secreted. Its subcellular location is the host cytoplasm. It is found in the host nucleus. Its function is as follows. Effector that enhances P.infestans colonization of Nicotiana benthamiana leaves. This Phytophthora infestans (strain T30-4) (Potato late blight agent) protein is RxLR effector protein PITG_15972.